A 102-amino-acid chain; its full sequence is Small ribosomal subunit protein uS10 (102 aa).

The protein belongs to the universal ribosomal protein uS10 family. In terms of assembly, part of the 30S ribosomal subunit.

Involved in the binding of tRNA to the ribosomes. This chain is Small ribosomal subunit protein uS10, found in Methanoregula boonei (strain DSM 21154 / JCM 14090 / 6A8).